A 223-amino-acid chain; its full sequence is Alpha-S2-casein (223 aa).

A signal peptide spans 1–15 (MKFFIFTCLLAVALA). Ser-23, Ser-24, Ser-25, Ser-72, Ser-73, Ser-74, Ser-77, Ser-145, Ser-147, Ser-151, and Ser-159 each carry phosphoserine. The stretch at residues 77–141 (SAEVAPEEVK…AGPFTPTVNR (65 aa)) is a repeat. The stretch at residues 159-223 (STEVFTKKTK…TNAIPYVRYL (65 aa)) is a repeat.

It belongs to the alpha-casein family. In terms of tissue distribution, mammary gland specific. Secreted in milk.

The protein localises to the secreted. In terms of biological role, important role in the capacity of milk to transport calcium phosphate. The chain is Alpha-S2-casein (CSN1S2) from Ovis aries (Sheep).